Here is a 410-residue protein sequence, read N- to C-terminus: Gamma-glutamyl phosphate reductase (410 aa).

The protein belongs to the gamma-glutamyl phosphate reductase family.

It localises to the cytoplasm. It carries out the reaction L-glutamate 5-semialdehyde + phosphate + NADP(+) = L-glutamyl 5-phosphate + NADPH + H(+). It functions in the pathway amino-acid biosynthesis; L-proline biosynthesis; L-glutamate 5-semialdehyde from L-glutamate: step 2/2. In terms of biological role, catalyzes the NADPH-dependent reduction of L-glutamate 5-phosphate into L-glutamate 5-semialdehyde and phosphate. The product spontaneously undergoes cyclization to form 1-pyrroline-5-carboxylate. In Campylobacter jejuni subsp. jejuni serotype O:2 (strain ATCC 700819 / NCTC 11168), this protein is Gamma-glutamyl phosphate reductase.